Here is a 96-residue protein sequence, read N- to C-terminus: Class I hydrophobin 3 (96 aa).

An N-terminal signal peptide occupies residues 1 to 18 (MQFAKIASVLAMAAAAVA). 4 cysteine pairs are disulfide-bonded: C43-C72, C51-C66, C52-C57, and C73-C92.

This sequence belongs to the fungal hydrophobin family.

It localises to the secreted. Its subcellular location is the cell wall. In terms of biological role, aerial growth, conidiation, and dispersal of filamentous fungi in the environment rely upon a capability of their secreting small amphipathic proteins called hydrophobins (HPBs) with low sequence identity. Class I can self-assemble into an outermost layer of rodlet bundles on aerial cell surfaces, conferring cellular hydrophobicity that supports fungal growth, development and dispersal; whereas Class II form highly ordered films at water-air interfaces through intermolecular interactions but contribute nothing to the rodlet structure. Does not seem to be important for the ability to cause seedling disease. This is Class I hydrophobin 3 from Gibberella moniliformis (Maize ear and stalk rot fungus).